Here is a 72-residue protein sequence, read N- to C-terminus: NAD(P)H-quinone oxidoreductase subunit O (72 aa).

The protein belongs to the complex I NdhO subunit family. NDH-1 can be composed of about 15 different subunits; different subcomplexes with different compositions have been identified which probably have different functions.

The protein resides in the cellular thylakoid membrane. The enzyme catalyses a plastoquinone + NADH + (n+1) H(+)(in) = a plastoquinol + NAD(+) + n H(+)(out). The catalysed reaction is a plastoquinone + NADPH + (n+1) H(+)(in) = a plastoquinol + NADP(+) + n H(+)(out). Its function is as follows. NDH-1 shuttles electrons from an unknown electron donor, via FMN and iron-sulfur (Fe-S) centers, to quinones in the respiratory and/or the photosynthetic chain. The immediate electron acceptor for the enzyme in this species is believed to be plastoquinone. Couples the redox reaction to proton translocation, and thus conserves the redox energy in a proton gradient. Cyanobacterial NDH-1 also plays a role in inorganic carbon-concentration. This chain is NAD(P)H-quinone oxidoreductase subunit O, found in Synechococcus sp. (strain JA-3-3Ab) (Cyanobacteria bacterium Yellowstone A-Prime).